A 270-amino-acid polypeptide reads, in one-letter code: Protein MGF 110-1L (270 aa).

An N-terminal signal peptide occupies residues 1–26 (MLGLQIFTLLSIPTLLYTYEIEPLER). At 27–117 (TSTPPEKELG…HERHEADIRK (91 aa)) the chain is on the extracellular side. The A repeat unit spans residues 27-146 (TSTPPEKELG…YIRKRSLQTV (120 aa)). N-linked (GlcNAc...) asparagine; by host glycosylation occurs at Asn75. A helical membrane pass occupies residues 118-138 (WQKLLTYGFYLAGCILAVNYI). The Cytoplasmic portion of the chain corresponds to 139 to 145 (RKRSLQT). Residues 146–166 (VMYLLVFLVISFLLSQLMLYG) traverse the membrane as a helical segment. The B repeat unit spans residues 147–270 (MYLLVFLVIS…DNLMKKQDIM (124 aa)). Residues 167 to 270 (ELEDKKHKIG…DNLMKKQDIM (104 aa)) are Extracellular-facing.

This sequence belongs to the asfivirus MGF 110 family.

It is found in the membrane. Its function is as follows. Plays a role in virus cell tropism, and may be required for efficient virus replication in macrophages. This is Protein MGF 110-1L from Ornithodoros (relapsing fever ticks).